Consider the following 620-residue polypeptide: Chaperone protein HscA homolog (620 aa).

The protein belongs to the heat shock protein 70 family.

Its function is as follows. Chaperone involved in the maturation of iron-sulfur cluster-containing proteins. Has a low intrinsic ATPase activity which is markedly stimulated by HscB. This Shewanella baltica (strain OS155 / ATCC BAA-1091) protein is Chaperone protein HscA homolog.